The primary structure comprises 123 residues: Ribonuclease P protein component (123 aa).

It belongs to the RnpA family. As to quaternary structure, consists of a catalytic RNA component (M1 or rnpB) and a protein subunit.

It catalyses the reaction Endonucleolytic cleavage of RNA, removing 5'-extranucleotides from tRNA precursor.. In terms of biological role, RNaseP catalyzes the removal of the 5'-leader sequence from pre-tRNA to produce the mature 5'-terminus. It can also cleave other RNA substrates such as 4.5S RNA. The protein component plays an auxiliary but essential role in vivo by binding to the 5'-leader sequence and broadening the substrate specificity of the ribozyme. The polypeptide is Ribonuclease P protein component (Bordetella bronchiseptica (strain ATCC BAA-588 / NCTC 13252 / RB50) (Alcaligenes bronchisepticus)).